A 361-amino-acid chain; its full sequence is MCETASRTLPPGIEPISGDEARRLIHHTSGPELEALLDRAEAVRRAVHGDEVALCGITNAKSGRCPEDCGFCSQSARFEGADAPVYPMIGAGEIVEQARKAERAGAREFSIVASGTRLSREQELATVEDALRRLRAETAVEPCASLGLMREPELRRLKDAGLMHYHHNLETARSHFENVCTTHTFDEQLETIRAAKGLGLKLCSGGILGMGETPEQRVEFAEEVRDLGVDCVPVNFLNPRAGTPMEHLKAITPEECLAALAVFRLMMPAAHIFVMGGREVNLGDRQHLIFRAGANGTMVGNYLTSAGRAPDLTVGMVERQGLTLRPPDTGKAWAFDGHAPSDADWNRKAAEPRPRALPVVR.

The region spanning 47–278 is the Radical SAM core domain; the sequence is VHGDEVALCG…AAHIFVMGGR (232 aa). [4Fe-4S] cluster-binding residues include cysteine 65, cysteine 69, and cysteine 72. The [2Fe-2S] cluster site is built by serine 110, cysteine 143, and cysteine 203.

Belongs to the radical SAM superfamily. Biotin synthase family. As to quaternary structure, homodimer. [4Fe-4S] cluster serves as cofactor. [2Fe-2S] cluster is required as a cofactor.

The enzyme catalyses (4R,5S)-dethiobiotin + (sulfur carrier)-SH + 2 reduced [2Fe-2S]-[ferredoxin] + 2 S-adenosyl-L-methionine = (sulfur carrier)-H + biotin + 2 5'-deoxyadenosine + 2 L-methionine + 2 oxidized [2Fe-2S]-[ferredoxin]. Its pathway is cofactor biosynthesis; biotin biosynthesis; biotin from 7,8-diaminononanoate: step 2/2. Catalyzes the conversion of dethiobiotin (DTB) to biotin by the insertion of a sulfur atom into dethiobiotin via a radical-based mechanism. In Anaeromyxobacter dehalogenans (strain 2CP-C), this protein is Biotin synthase.